The following is a 451-amino-acid chain: Protoheme IX farnesyltransferase, mitochondrial (451 aa).

Transmembrane regions (helical) follow at residues 149 to 169 (TILV…PATV), 240 to 260 (PTVA…YTSL), 265 to 285 (IINT…GWAA), 289 to 309 (LTHP…FPHF), 339 to 359 (VALR…YFNI), and 414 to 434 (KAFF…ILHK).

It belongs to the UbiA prenyltransferase family.

The protein localises to the mitochondrion membrane. Converts protoheme IX and farnesyl diphosphate to heme O. The sequence is that of Protoheme IX farnesyltransferase, mitochondrial (COX10) from Candida glabrata (strain ATCC 2001 / BCRC 20586 / JCM 3761 / NBRC 0622 / NRRL Y-65 / CBS 138) (Yeast).